Here is a 585-residue protein sequence, read N- to C-terminus: Amyloid protein-binding protein 2 (585 aa).

TPR repeat units follow at residues 50–83, 120–153, 206–239, 288–321, 333–367, 429–462, 471–505, and 514–547; these read QGRL…HHCF, IQVG…CTLH, AALY…ITAG, SDTL…RQSV, HEDL…ITHI, AKHY…KEQL, ALSV…GKKL, and EYDY…NRLR.

As to quaternary structure, component of a CRL2 E3 ubiquitin-protein ligase complex, also named ECS (Elongin BC-CUL2/5-SOCS-box protein) complex, composed of CUL2, Elongin BC (ELOB and ELOC), RBX1 and substrate-specific adapter APPBP2. Interacts with APP; APP interaction inhibits the E3 ubiquitin-protein ligase activity of the CRL2(APPBP2) complex. In terms of processing, rapidly degraded by the proteasome upon overexpression of a C-terminal fragment of APP.

It is found in the nucleus. The protein resides in the cytoplasm. The protein localises to the cytoskeleton. It localises to the membrane. Its pathway is protein modification; protein ubiquitination. Its activity is regulated as follows. E3 ubiquitin-protein ligase activity of the CRL2(APPBP2) complex is inhibited by APP. Substrate-recognition component of a Cul2-RING (CRL2) E3 ubiquitin-protein ligase complex of the DesCEND (destruction via C-end degrons) pathway, which recognizes a C-degron located at the extreme C terminus of target proteins, leading to their ubiquitination and degradation. The C-degron recognized by the DesCEND pathway is usually a motif of less than ten residues and can be present in full-length proteins, truncated proteins or proteolytically cleaved forms. The CRL2(APPBP2) complex specifically recognizes proteins with a -Arg-Xaa-Xaa-Gly degron at the C-terminus, leading to their ubiquitination and degradation. The CRL2(APPBP2) complex mediates ubiquitination and degradation of truncated SELENOV selenoproteins produced by failed UGA/Sec decoding, which end with a -Arg-Xaa-Xaa-Gly degron. May play a role in intracellular protein transport: may be involved in the translocation of APP along microtubules toward the cell surface. This chain is Amyloid protein-binding protein 2, found in Homo sapiens (Human).